The following is a 479-amino-acid chain: Glycogen synthase (479 aa).

Lys15 is a binding site for ADP-alpha-D-glucose.

Belongs to the glycosyltransferase 1 family. Bacterial/plant glycogen synthase subfamily.

The enzyme catalyses [(1-&gt;4)-alpha-D-glucosyl](n) + ADP-alpha-D-glucose = [(1-&gt;4)-alpha-D-glucosyl](n+1) + ADP + H(+). The protein operates within glycan biosynthesis; glycogen biosynthesis. Synthesizes alpha-1,4-glucan chains using ADP-glucose. This Histophilus somni (strain 129Pt) (Haemophilus somnus) protein is Glycogen synthase.